Here is a 169-residue protein sequence, read N- to C-terminus: Cytochrome c oxidase subunit 4 isoform 1, mitochondrial (169 aa).

The N-terminal 22 residues, 1 to 22, are a transit peptide targeting the mitochondrion; that stretch reads MLATRVFSLVGKRAISTSVCVR. Topologically, residues 23 to 98 are mitochondrial matrix; sequence AHESVVKSED…SFAEMNRGSN (76 aa). The residue at position 29 (Lys29) is an N6-acetyllysine; alternate. At Lys29 the chain carries N6-succinyllysine; alternate. The residue at position 53 (Lys53) is an N6-acetyllysine. A phosphoserine mark is found at Ser56 and Ser58. Lys60 carries the N6-acetyllysine; alternate modification. N6-succinyllysine; alternate is present on Lys60. The residue at position 67 (Lys67) is an N6-acetyllysine. A helical transmembrane segment spans residues 99-124; the sequence is EWKTVVGGAMFFIGFTALVIMWQKHY. The Mitochondrial intermembrane segment spans residues 125–169; it reads VYGPLPQSFDKEWVAKQTKRMLDMKVNPIQGLASKWDYEKNEWKK.

Belongs to the cytochrome c oxidase IV family. Component of the cytochrome c oxidase (complex IV, CIV), a multisubunit enzyme composed of 14 subunits. The complex is composed of a catalytic core of 3 subunits MT-CO1, MT-CO2 and MT-CO3, encoded in the mitochondrial DNA, and 11 supernumerary subunits COX4I1 (or COX4I2), COX5A, COX5B, COX6A1 (or COX6A2), COX6B1 (or COX6B2), COX6C, COX7A2 (or COX7A1), COX7B, COX7C, COX8A and NDUFA4, which are encoded in the nuclear genome. The complex exists as a monomer or a dimer and forms supercomplexes (SCs) in the inner mitochondrial membrane with NADH-ubiquinone oxidoreductase (complex I, CI) and ubiquinol-cytochrome c oxidoreductase (cytochrome b-c1 complex, complex III, CIII), resulting in different assemblies (supercomplex SCI(1)III(2)IV(1) and megacomplex MCI(2)III(2)IV(2)). Interacts with AFG1L. Interacts with PHB2; the interaction decreases in absence of SPHK2. Interacts with ABCB7; this interaction allows the regulation of cellular iron homeostasis and cellular reactive oxygen species (ROS) levels in cardiomyocytes. Interacts with FLVCR2; this interaction occurs in the absence of heme and is disrupted upon heme binding. Interacts with IRGC. In terms of tissue distribution, ubiquitous.

Its subcellular location is the mitochondrion inner membrane. It participates in energy metabolism; oxidative phosphorylation. In terms of biological role, component of the cytochrome c oxidase, the last enzyme in the mitochondrial electron transport chain which drives oxidative phosphorylation. The respiratory chain contains 3 multisubunit complexes succinate dehydrogenase (complex II, CII), ubiquinol-cytochrome c oxidoreductase (cytochrome b-c1 complex, complex III, CIII) and cytochrome c oxidase (complex IV, CIV), that cooperate to transfer electrons derived from NADH and succinate to molecular oxygen, creating an electrochemical gradient over the inner membrane that drives transmembrane transport and the ATP synthase. Cytochrome c oxidase is the component of the respiratory chain that catalyzes the reduction of oxygen to water. Electrons originating from reduced cytochrome c in the intermembrane space (IMS) are transferred via the dinuclear copper A center (CU(A)) of subunit 2 and heme A of subunit 1 to the active site in subunit 1, a binuclear center (BNC) formed by heme A3 and copper B (CU(B)). The BNC reduces molecular oxygen to 2 water molecules using 4 electrons from cytochrome c in the IMS and 4 protons from the mitochondrial matrix. This is Cytochrome c oxidase subunit 4 isoform 1, mitochondrial from Homo sapiens (Human).